A 147-amino-acid polypeptide reads, in one-letter code: Transthyretin (147 aa).

A signal peptide spans 1 to 20 (MASHRLLLLCLAGLVFVSEA). A Sulfocysteine modification is found at Cys30. L-thyroxine is bound at residue Lys35. At Glu62 the chain carries 4-carboxyglutamate; in a patient with Moyamoya disease. A Phosphoserine modification is found at Ser72. Glu74 is an L-thyroxine binding site. Residue Asn118 is glycosylated (N-linked (GlcNAc...) asparagine). Ser137 is a binding site for L-thyroxine.

Belongs to the transthyretin family. In terms of assembly, homotetramer. Dimer of dimers. In the homotetramer, subunits assemble around a central channel that can accommodate two ligand molecules. Interacts with RBP4. In terms of processing, not glycosylated under normal conditions. Following unfolding, caused for example by variant AMYLD1 'Gly-38', the cryptic Asn-118 site is exposed and glycosylated by STT3B-containing OST complex, leading to its degradation by the ER-associated degradation (ERAD) pathway. Sulfonation of the reactive cysteine Cys-30 enhances the stability of the native conformation of TTR, avoiding misassembly of the protein leading to amyloid formation. As to expression, detected in serum and cerebrospinal fluid (at protein level). Highly expressed in choroid plexus epithelial cells. Detected in retina pigment epithelium and liver.

The protein localises to the secreted. It is found in the cytoplasm. Functionally, thyroid hormone-binding protein. Probably transports thyroxine from the bloodstream to the brain. In Homo sapiens (Human), this protein is Transthyretin (TTR).